The primary structure comprises 191 residues: Transcriptional regulator MET32 (191 aa).

Residues 70 to 96 (KKENALPKPPKSSKSKPQDRRNSTGEK) form a disordered region. Positions 85-96 (KPQDRRNSTGEK) are enriched in basic and acidic residues. The C2H2-type 1 zinc-finger motif lies at 98–120 (FKCAKCSLEFSRSSDLRRHEKTH). Residues 126-150 (NICPQCGKGFARKDALKRHYDTLTC) form a C2H2-type 2; atypical zinc finger.

Interacts with MET4 and MET28.

It localises to the cytoplasm. The protein localises to the nucleus. Functionally, auxiliary transcriptional regulator of sulfur amino acid metabolism. Involved in the transcriptional activation of MET28. The chain is Transcriptional regulator MET32 (MET32) from Saccharomyces cerevisiae (strain ATCC 204508 / S288c) (Baker's yeast).